The primary structure comprises 124 residues: Large ribosomal subunit protein bL12 (124 aa).

Belongs to the bacterial ribosomal protein bL12 family. In terms of assembly, homodimer. Part of the ribosomal stalk of the 50S ribosomal subunit. Forms a multimeric L10(L12)X complex, where L10 forms an elongated spine to which 2 to 4 L12 dimers bind in a sequential fashion. Binds GTP-bound translation factors.

Functionally, forms part of the ribosomal stalk which helps the ribosome interact with GTP-bound translation factors. Is thus essential for accurate translation. This Ralstonia pickettii (strain 12J) protein is Large ribosomal subunit protein bL12.